Consider the following 115-residue polypeptide: NADH-ubiquinone oxidoreductase chain 3 (115 aa).

A run of 3 helical transmembrane segments spans residues 4–24 (LVTM…AFWL), 55–75 (FFLV…LLPM), and 86–106 (TMTL…AYEW).

The protein belongs to the complex I subunit 3 family. As to quaternary structure, core subunit of respiratory chain NADH dehydrogenase (Complex I) which is composed of 45 different subunits. Interacts with TMEM186. Interacts with TMEM242.

The protein resides in the mitochondrion inner membrane. It carries out the reaction a ubiquinone + NADH + 5 H(+)(in) = a ubiquinol + NAD(+) + 4 H(+)(out). Its function is as follows. Core subunit of the mitochondrial membrane respiratory chain NADH dehydrogenase (Complex I) which catalyzes electron transfer from NADH through the respiratory chain, using ubiquinone as an electron acceptor. Essential for the catalytic activity of complex I. This chain is NADH-ubiquinone oxidoreductase chain 3, found in Nelsonia neotomodon (Diminutive woodrat).